The following is a 277-amino-acid chain: Energy-coupling factor transporter ATP-binding protein EcfA1 (277 aa).

The region spanning Ile-5–Asp-243 is the ABC transporter domain. ATP is bound at residue Gly-42 to Ser-49.

It belongs to the ABC transporter superfamily. Energy-coupling factor EcfA family. As to quaternary structure, forms a stable energy-coupling factor (ECF) transporter complex composed of 2 membrane-embedded substrate-binding proteins (S component), 2 ATP-binding proteins (A component) and 2 transmembrane proteins (T component).

Its subcellular location is the cell membrane. In terms of biological role, ATP-binding (A) component of a common energy-coupling factor (ECF) ABC-transporter complex. Unlike classic ABC transporters this ECF transporter provides the energy necessary to transport a number of different substrates. This chain is Energy-coupling factor transporter ATP-binding protein EcfA1, found in Caldanaerobacter subterraneus subsp. tengcongensis (strain DSM 15242 / JCM 11007 / NBRC 100824 / MB4) (Thermoanaerobacter tengcongensis).